The following is a 698-amino-acid chain: MARKTPIERYRNIGIAAHIDAGKTTTTERILFYTGVSHKMGETHDGAATMDWMSQEQERGITITSAATTCFWRGMDQQYPETRINIIDTPGHVDFTIEVERSLRVLDGAVAVFCAVGGVEPQSETVWRQANKYGVPRIAFVNKMDRAGADFSRVVGQIRDRLGSQAVPIQLPIGAEDNFQGVIDLLRMSAIYWDRDEQGMTYSETEIPEELKADAEAAREEMVEAAAEADEELMDKYLNEGELSHDDIKRGLRQRTLNTEIVLCMCGSAFKNKGVQTLLDAVIEFLPAPNEVPAIEGLLDDEETVVTRESTDDQPFAALAFKIANDPYVGNLTFFRVYSGVLSSGDAVFNPVKGKKERIGRLLQMHSNQREEIKEVRAGDIAAAVGLKDVTTGDTLCDPSNKVTLERMEFPEPVIAVAVEPKTRSDQEKMGQALGRLAQEDPSFRVRTDEESGQTIISGMGELHLDIIVDRLKREFKVEANVGAPQVAYRETIRKQIEQEGKFVRQSGGRGQYGHVHIRMKPQERGEGYSFESKIVGGVVPKEYIPSVDHGCREVMEEGVLAGYPVVDVGVELYDGSYHDVDSSEMAFKIAGSMAFREGFMKADPVLLEPVMKVEVVTPEEYMGDVVGDLNRRRGTVQKMEDIPNGKQIRAQVPLKEMFGYATDLRSNTQGRASYVMEFEEYHEAPASIADEVIKKAS.

In terms of domain architecture, tr-type G spans 8–290; the sequence is ERYRNIGIAA…AVIEFLPAPN (283 aa). Residues 17–24, 88–92, and 142–145 contribute to the GTP site; these read AHIDAGKT, DTPGH, and NKMD.

This sequence belongs to the TRAFAC class translation factor GTPase superfamily. Classic translation factor GTPase family. EF-G/EF-2 subfamily.

It is found in the cytoplasm. Catalyzes the GTP-dependent ribosomal translocation step during translation elongation. During this step, the ribosome changes from the pre-translocational (PRE) to the post-translocational (POST) state as the newly formed A-site-bound peptidyl-tRNA and P-site-bound deacylated tRNA move to the P and E sites, respectively. Catalyzes the coordinated movement of the two tRNA molecules, the mRNA and conformational changes in the ribosome. This chain is Elongation factor G, found in Halorhodospira halophila (strain DSM 244 / SL1) (Ectothiorhodospira halophila (strain DSM 244 / SL1)).